A 61-amino-acid polypeptide reads, in one-letter code: Small ribosomal subunit protein uS14 (61 aa).

Zn(2+) contacts are provided by cysteine 24, cysteine 27, cysteine 40, and cysteine 43.

This sequence belongs to the universal ribosomal protein uS14 family. Zinc-binding uS14 subfamily. Part of the 30S ribosomal subunit. Contacts proteins S3 and S10. Zn(2+) is required as a cofactor.

Its function is as follows. Binds 16S rRNA, required for the assembly of 30S particles and may also be responsible for determining the conformation of the 16S rRNA at the A site. In Moorella thermoacetica (strain ATCC 39073 / JCM 9320), this protein is Small ribosomal subunit protein uS14.